Here is a 226-residue protein sequence, read N- to C-terminus: Ribonuclease 3 (226 aa).

Positions 6–128 constitute an RNase III domain; that stretch reads TNRLQKKLGY…LIGGVFLDSD (123 aa). A Mg(2+)-binding site is contributed by E41. D45 is a catalytic residue. Residues D114 and E117 each contribute to the Mg(2+) site. Residue E117 is part of the active site. The 71-residue stretch at 155 to 225 folds into the DRBM domain; sequence DPKTRLQEYL…AEQALKLLEL (71 aa).

The protein belongs to the ribonuclease III family. Homodimer. Mg(2+) is required as a cofactor.

It is found in the cytoplasm. It catalyses the reaction Endonucleolytic cleavage to 5'-phosphomonoester.. Digests double-stranded RNA. Involved in the processing of primary rRNA transcript to yield the immediate precursors to the large and small rRNAs (23S and 16S). Processes some mRNAs, and tRNAs when they are encoded in the rRNA operon. Processes pre-crRNA and tracrRNA of type II CRISPR loci if present in the organism. This is Ribonuclease 3 from Sodalis glossinidius (strain morsitans).